A 322-amino-acid polypeptide reads, in one-letter code: Acetyl-coenzyme A carboxylase carboxyl transferase subunit alpha (322 aa).

The CoA carboxyltransferase C-terminal domain maps to 39–296; it reads DLTALKKQLI…HSKLVTELNY (258 aa).

The protein belongs to the AccA family. As to quaternary structure, acetyl-CoA carboxylase is a heterohexamer composed of biotin carboxyl carrier protein (accB), biotin carboxylase (accC) and two subunits each of ACCase subunit alpha (accA) and ACCase subunit beta (accD).

It is found in the plastid. It localises to the chloroplast. It catalyses the reaction N(6)-carboxybiotinyl-L-lysyl-[protein] + acetyl-CoA = N(6)-biotinyl-L-lysyl-[protein] + malonyl-CoA. It functions in the pathway lipid metabolism; malonyl-CoA biosynthesis; malonyl-CoA from acetyl-CoA: step 1/1. Component of the acetyl coenzyme A carboxylase (ACC) complex. First, biotin carboxylase catalyzes the carboxylation of biotin on its carrier protein (BCCP) and then the CO(2) group is transferred by the carboxyltransferase to acetyl-CoA to form malonyl-CoA. In Antithamnion sp. (Red alga), this protein is Acetyl-coenzyme A carboxylase carboxyl transferase subunit alpha.